A 75-amino-acid polypeptide reads, in one-letter code: UPF0512 protein D (75 aa).

The segment at 1–20 (MAIFKSISSISNSTGSMGSS) is disordered.

This sequence belongs to the UPF0512 family.

In Dictyostelium discoideum (Social amoeba), this protein is UPF0512 protein D.